The primary structure comprises 75 residues: uncharacterized protein (75 aa).

Residues 1 to 14 (MNDNNDNNNNNKNI) show a composition bias toward low complexity. Residues 1-30 (MNDNNDNNNNNKNIDNVDDDNDDNDKGKYK) form a disordered region.

This is an uncharacterized protein from Dictyostelium discoideum (Social amoeba).